The following is a 276-amino-acid chain: ATP synthase subunit a (276 aa).

Transmembrane regions (helical) follow at residues 47 to 67, 107 to 127, 152 to 172, 188 to 208, 226 to 246, and 247 to 267; these read WHIDSLLFSVGLGVLFLWLFY, IAPLGLTIFVWVFLMNLMDLI, DLNVTLGLALSVFALIVFYSI, PFNHWALIPINFVLETVTLVA, LIFILIALMPWWAQFALSVPW, and AIFHILVIVLQAFIFMMLTIV.

This sequence belongs to the ATPase A chain family. In terms of assembly, F-type ATPases have 2 components, CF(1) - the catalytic core - and CF(0) - the membrane proton channel. CF(1) has five subunits: alpha(3), beta(3), gamma(1), delta(1), epsilon(1). CF(0) has three main subunits: a(1), b(2) and c(9-12). The alpha and beta chains form an alternating ring which encloses part of the gamma chain. CF(1) is attached to CF(0) by a central stalk formed by the gamma and epsilon chains, while a peripheral stalk is formed by the delta and b chains.

Its subcellular location is the cell inner membrane. Functionally, key component of the proton channel; it plays a direct role in the translocation of protons across the membrane. This Shewanella pealeana (strain ATCC 700345 / ANG-SQ1) protein is ATP synthase subunit a.